Here is a 502-residue protein sequence, read N- to C-terminus: Protein GIS3 (502 aa).

The protein resides in the cytoplasm. Its subcellular location is the nucleus. The chain is Protein GIS3 (GIS3) from Saccharomyces cerevisiae (strain ATCC 204508 / S288c) (Baker's yeast).